Reading from the N-terminus, the 166-residue chain is Probable RNA-binding protein EIF1AD (166 aa).

One can recognise an S1-like domain in the interval 5–89; sequence TKRKHVVKEV…VKAEISFVLC (85 aa). A Nuclear localization signal motif is present at residues 6-12; that stretch reads KRKHVVK. T33 carries the phosphothreonine modification. The short motif at 56–65 is the Nuclear localization signal element; the sequence is KYRKNIWIKR. Residues 99-166 are disordered; that stretch reads DGHWPEAFSQ…EEESEEEEAA (68 aa). Positions 110–119 are enriched in basic and acidic residues; that stretch reads TEKDNNDRNR. Phosphoserine occurs at positions 132, 136, 137, 138, 156, and 160. Over residues 156–166 the composition is skewed to acidic residues; it reads SEEESEEEEAA.

It belongs to the EIF1AD family. In terms of assembly, interacts with GAPDH and STAT1.

The protein resides in the nucleus. Functionally, plays a role into cellular response to oxidative stress. Decreases cell proliferation. This Bos taurus (Bovine) protein is Probable RNA-binding protein EIF1AD (EIF1AD).